Here is a 1216-residue protein sequence, read N- to C-terminus: Apical endosomal glycoprotein (1216 aa).

An N-terminal signal peptide occupies residues 1–21 (MCLPSCLLSIWVLFMAAQSLG). Topologically, residues 22 to 1155 (KTWVPDHCRS…SQGRVAAPVS (1134 aa)) are extracellular. The region spanning 27–54 (DHCRSPTEATCNFVCDCGDCSDEAQCGF) is the LDL-receptor class A 1; truncated domain. The 163-residue stretch at 62-224 (NTPFTCNFEQ…DDMEFWDCGL (163 aa)) folds into the MAM 1 domain. N-linked (GlcNAc...) asparagine glycosylation occurs at Asn205. One can recognise an LDL-receptor class A 2 domain in the interval 229–269 (ARCPLGHHHCQNKACVEPHQLCDGEDNCGDSSDEDPLICSH). Cystine bridges form between Cys231/Cys243, Cys238/Cys256, and Cys250/Cys267. The 160-residue stretch at 268-427 (SHHMATDFET…DLIMSNHCIL (160 aa)) folds into the MAM 2 domain. 3 N-linked (GlcNAc...) asparagine glycosylation sites follow: Asn291, Asn341, and Asn368. In terms of domain architecture, LDL-receptor class A 3 spans 454–491 (RTCDAGHLSCDELCVPPEQLCDFQQHCAEGEDEEKCGT). Intrachain disulfides connect Cys456/Cys467, Cys463/Cys480, and Cys474/Cys489. MAM domains lie at 492–647 (TDFE…DCNP), 654–813 (DQEV…PCWA), 812–973 (WAAK…PCAQ), and 972–1142 (AQPG…HCKQ). Asn639 carries an N-linked (GlcNAc...) asparagine glycan. Residue Asn839 is glycosylated (N-linked (GlcNAc...) asparagine). Residues 1156 to 1176 (VPVAVGGALLLFLLLLGLGGW) form a helical membrane-spanning segment. Over 1177-1216 (HWLQKQHLPCQSTDAAASGFDNILFNADQVTLPESITSNP) the chain is Cytoplasmic.

As to expression, apical endosomal tubules of developing rat intestinal epithelial cells.

It is found in the membrane. In terms of biological role, probably involved in the sorting and selective transport of receptors and ligands across polarized epithelia. The chain is Apical endosomal glycoprotein (Mamdc4) from Rattus norvegicus (Rat).